A 171-amino-acid chain; its full sequence is Co-chaperone protein HscB (171 aa).

A J domain is found at 2-74 (DYFTLFGLPA…LTRAEYLLSL (73 aa)).

Belongs to the HscB family. In terms of assembly, interacts with HscA and stimulates its ATPase activity. Interacts with IscU.

Co-chaperone involved in the maturation of iron-sulfur cluster-containing proteins. Seems to help targeting proteins to be folded toward HscA. This Salmonella choleraesuis (strain SC-B67) protein is Co-chaperone protein HscB.